The sequence spans 1196 residues: Contactin rig-6 (1196 aa).

Residues 1–19 (MMMLIRCISIFLLFGFVNA) form the signal peptide. N100 and N195 each carry an N-linked (GlcNAc...) asparagine glycan. Ig-like C2-type domains follow at residues 144–225 (PQIS…ARNS) and 232–319 (PPIL…CSLS). Intrachain disulfides connect C169-C220 and C263-C316. The N-linked (GlcNAc...) asparagine glycan is linked to N343. Ig-like C2-type domains lie at 355-438 (PQIF…VKLR), 441-533 (PSIL…ALLT), 539-626 (PVFP…VQLI), and 631-730 (PSIK…EFVT). C372 and C420 are joined by a disulfide. Residue N457 is glycosylated (N-linked (GlcNAc...) asparagine). Disulfide bonds link C462–C517 and C562–C610. An N-linked (GlcNAc...) asparagine glycan is attached at N644. C653 and C718 are oxidised to a cystine. Fibronectin type-III domains are found at residues 736-844 (SPIA…TAPG), 849-961 (TIDN…SHGE), 963-1057 (KKVS…TKQH), and 1064-1168 (LIGK…LGSP). N-linked (GlcNAc...) asparagine glycosylation is found at N895, N925, N945, N974, N979, N986, N1002, and N1092. A helical transmembrane segment spans residues 1174–1194 (TTGSSDVPIPSLLLLLLLLLW). A lipid anchor (GPI-anchor amidated serine) is attached at S1177. Positions 1178–1196 (SDVPIPSLLLLLLLLLWRL) are cleaved as a propeptide — removed in mature form.

It belongs to the immunoglobulin superfamily. Contactin family. In terms of assembly, interacts with sax-7; the interaction establishes synaptic connections between neurons. In terms of tissue distribution, expressed in neurons including the I1 and I3 pharyngeal interneurons, NSM and VNC motor neurons, HSN and CAN neurons, the ALM and PLM touch receptor neurons and other unidentified head neurons. Expressed in AVG interneurons. Also expressed in somatic muscles, the excretory canal, the excretory cell and the hypodermis.

Its subcellular location is the cell membrane. It localises to the perikaryon. The protein localises to the cell projection. The protein resides in the axon. It is found in the synapse. Its subcellular location is the cytoplasm. Its function is as follows. Probable cell adhesion protein involved in patterning of the nervous system, playing a role in ALM and PLM touch receptor axon growth and VNC axon navigation. By associating with the transmembrane protein sax-7, mediates axonal interactions to establish synaptic connections between the AVG interneuron and the two PHC sensory neurons. Also required for non-neuronal cell migration in the excretory canal, regulating excretory canal elongation and excretory cell morphogenesis. Plays a role in regulating male mating behavior. This is Contactin rig-6 from Caenorhabditis elegans.